A 140-amino-acid chain; its full sequence is Lymphocyte antigen 6H (140 aa).

A signal peptide spans 1–25 (MLPAAMKGLGLVLLAALLCSSPAHG). Positions 26 to 91 (LWCQDCTLTT…RHFFSDYLMG (66 aa)) constitute a UPAR/Ly6 domain. 5 disulfides stabilise this stretch: Cys-28-Cys-52, Cys-31-Cys-40, Cys-45-Cys-73, Cys-77-Cys-104, and Cys-105-Cys-110. An N-linked (GlcNAc...) asparagine glycan is attached at Asn-36.

It is found in the cell membrane. This Bos taurus (Bovine) protein is Lymphocyte antigen 6H (LY6H).